Consider the following 113-residue polypeptide: Protein ORF3 (113 aa).

Hydrophobic regions lie at residues 1–21 (MGSP…CLCC) and 32–52 (AVVG…GLIL). The interaction with host HPX stretch occupies residues 27–67 (ASRLAAVVGGAAAVPAVVSGVTGLILSPSPSPIFIQPTPSP). The tract at residues 47–71 (VTGLILSPSPSPIFIQPTPSPPMSF) is interaction with the capsid protein. Serine 70 is subject to Phosphoserine; by host. The tract at residues 71–113 (FHNPGLELALDSRPAPLXPLGVTSPSAPPLPPVVDLPQLGLRR) is homodimerization, and interaction with host AMBP/bikunin. A disordered region spans residues 90–113 (LGVTSPSAPPLPPVVDLPQLGLRR). The segment at 94–103 (SPSAPPLPPV) is interaction with host SRC, HCK, FYN, PIK3R3 and GRB2. A PTAP/PSAP motif motif is present at residues 95 to 98 (PSAP).

The protein belongs to the hepevirus ORF3 protein family. Forms homooligomers. Interacts with host SRC, HCK, FYN, PIK3R3 and GRB2 (via SH3 domain); binding does not activate the kinases. Interacts with host AMBP/bikunin and AMBP/alpha-1-microglobulin peptides. Interacts with host HPX/hemopexin. Interacts (when phosphorylated) with capsid protein ORF2. Interacts with host TSG101; this interaction plays a role in viral release from the host cell. Interacts with host SIRPA; this interaction down-regulates the phosphorylation of host IRF3. Post-translationally, palmitoylated in the N-terminus.

It is found in the host endoplasmic reticulum membrane. Its subcellular location is the host cytoplasm. The protein localises to the host cytoskeleton. It localises to the virion. The protein resides in the host cell membrane. Small multifunctional phosphoprotein involved in virion morphogenesis, egress and counteracting host innate immunity. Plays critical roles in the final steps of viral release by interacting with host TSG101, a member of the vacuolar protein-sorting pathway and using other cellular host proteins involved in vesicle formation pathway. Also acts as a viroporin and forms ion conductive pores allowing viral particle release. Impairs the generation of type I interferon by down-regulating host TLR3 and TLR7 as well as their downstream signaling pathways. Down-regulates the phosphorylation of host IRF3 via the interaction with host SIRP-alpha, thereby inhibiting IFN-I expression. Interacts with host microtubules. This is Protein ORF3 from Hepatitis E virus genotype 3 (isolate Human/United States/US2) (HEV-3).